The chain runs to 205 residues: dITP/XTP pyrophosphatase (205 aa).

Residue 7-12 (SNNRGK) participates in substrate binding. Glu-39 and Asp-68 together coordinate Mg(2+). Asp-68 acts as the Proton acceptor in catalysis. Residues Ala-69, 154–157 (FGFD), Lys-177, and 182–183 (HR) each bind substrate.

Belongs to the HAM1 NTPase family. Homodimer. The cofactor is Mg(2+).

It catalyses the reaction XTP + H2O = XMP + diphosphate + H(+). The enzyme catalyses dITP + H2O = dIMP + diphosphate + H(+). It carries out the reaction ITP + H2O = IMP + diphosphate + H(+). In terms of biological role, pyrophosphatase that catalyzes the hydrolysis of nucleoside triphosphates to their monophosphate derivatives, with a high preference for the non-canonical purine nucleotides XTP (xanthosine triphosphate), dITP (deoxyinosine triphosphate) and ITP. Seems to function as a house-cleaning enzyme that removes non-canonical purine nucleotides from the nucleotide pool, thus preventing their incorporation into DNA/RNA and avoiding chromosomal lesions. This is dITP/XTP pyrophosphatase from Acidovorax ebreus (strain TPSY) (Diaphorobacter sp. (strain TPSY)).